Reading from the N-terminus, the 65-residue chain is DNA gyrase inhibitor YacG (65 aa).

Residues C9, C12, C28, and C32 each contribute to the Zn(2+) site. Residues 43–65 (EEKRIPSQSENSDSDDWSGQPEQ) form a disordered region.

Belongs to the DNA gyrase inhibitor YacG family. Interacts with GyrB. It depends on Zn(2+) as a cofactor.

In terms of biological role, inhibits all the catalytic activities of DNA gyrase by preventing its interaction with DNA. Acts by binding directly to the C-terminal domain of GyrB, which probably disrupts DNA binding by the gyrase. The chain is DNA gyrase inhibitor YacG from Photorhabdus laumondii subsp. laumondii (strain DSM 15139 / CIP 105565 / TT01) (Photorhabdus luminescens subsp. laumondii).